A 230-amino-acid chain; its full sequence is Transmembrane protein 221 (230 aa).

Helical transmembrane passes span 12-32 (AMTL…QLLF), 73-93 (ALAA…ALCG), 125-145 (LFCC…LLLF), and 147-167 (IEAG…LVAI). The segment at 184–230 (RELSPPSFEDEPARPSEDSKSGCRAQPPQDEETETPIGAVTHQGSHF) is disordered. Residues 194 to 204 (EPARPSEDSKS) are compositionally biased toward basic and acidic residues.

The protein resides in the membrane. This chain is Transmembrane protein 221 (Tmem221), found in Mus musculus (Mouse).